The primary structure comprises 372 residues: Flagellar P-ring protein (372 aa).

A signal peptide spans 1–26; the sequence is MNLSSLPFRLLAAAVALCAIAAPASA.

It belongs to the FlgI family. The basal body constitutes a major portion of the flagellar organelle and consists of four rings (L,P,S, and M) mounted on a central rod.

It is found in the periplasm. The protein resides in the bacterial flagellum basal body. In terms of biological role, assembles around the rod to form the L-ring and probably protects the motor/basal body from shearing forces during rotation. This is Flagellar P-ring protein from Xanthomonas axonopodis pv. citri (strain 306).